Reading from the N-terminus, the 82-residue chain is Translation initiation factor IF-1, chloroplastic (82 aa).

Residues Met-1–Arg-72 enclose the S1-like domain.

Belongs to the IF-1 family. Component of the 30S ribosomal translation pre-initiation complex which assembles on the 30S ribosome in the order IF-2 and IF-3, IF-1 and N-formylmethionyl-tRNA(fMet); mRNA recruitment can occur at any time during PIC assembly.

The protein resides in the plastid. It localises to the chloroplast. Its function is as follows. One of the essential components for the initiation of protein synthesis. Stabilizes the binding of IF-2 and IF-3 on the 30S subunit to which N-formylmethionyl-tRNA(fMet) subsequently binds. Helps modulate mRNA selection, yielding the 30S pre-initiation complex (PIC). Upon addition of the 50S ribosomal subunit IF-1, IF-2 and IF-3 are released leaving the mature 70S translation initiation complex. This chain is Translation initiation factor IF-1, chloroplastic, found in Cycas taitungensis (Prince sago).